The sequence spans 373 residues: Glutamate 5-kinase (373 aa).

Lysine 15 serves as a coordination point for ATP. Serine 55, aspartate 142, and asparagine 154 together coordinate substrate. Residues 174–175 (TD) and 216–222 (TGGMATK) each bind ATP. Positions 281-359 (AGRIIVDDGA…SRIEAILGYR (79 aa)) constitute a PUA domain.

This sequence belongs to the glutamate 5-kinase family.

The protein resides in the cytoplasm. It catalyses the reaction L-glutamate + ATP = L-glutamyl 5-phosphate + ADP. It functions in the pathway amino-acid biosynthesis; L-proline biosynthesis; L-glutamate 5-semialdehyde from L-glutamate: step 1/2. Catalyzes the transfer of a phosphate group to glutamate to form L-glutamate 5-phosphate. The protein is Glutamate 5-kinase of Pelobacter propionicus (strain DSM 2379 / NBRC 103807 / OttBd1).